Here is a 223-residue protein sequence, read N- to C-terminus: Deoxyribose-phosphate aldolase (223 aa).

Catalysis depends on aspartate 89, which acts as the Proton donor/acceptor. Lysine 152 functions as the Schiff-base intermediate with acetaldehyde in the catalytic mechanism. Residue lysine 181 is the Proton donor/acceptor of the active site.

This sequence belongs to the DeoC/FbaB aldolase family. DeoC type 1 subfamily.

The protein localises to the cytoplasm. The enzyme catalyses 2-deoxy-D-ribose 5-phosphate = D-glyceraldehyde 3-phosphate + acetaldehyde. It participates in carbohydrate degradation; 2-deoxy-D-ribose 1-phosphate degradation; D-glyceraldehyde 3-phosphate and acetaldehyde from 2-deoxy-alpha-D-ribose 1-phosphate: step 2/2. Functionally, catalyzes a reversible aldol reaction between acetaldehyde and D-glyceraldehyde 3-phosphate to generate 2-deoxy-D-ribose 5-phosphate. This is Deoxyribose-phosphate aldolase from Bacillus cytotoxicus (strain DSM 22905 / CIP 110041 / 391-98 / NVH 391-98).